Reading from the N-terminus, the 261-residue chain is Adenosylcobinamide-GDP ribazoletransferase (261 aa).

The next 5 helical transmembrane spans lie at 31–51 (YAICFFPLIGAVIGGVFFLTF), 59–79 (LGDILIAALLTSIPILISGGI), 125–145 (FGMVSVLTLKSSIIIAIFFVV), 183–203 (VIYLVITVIGMLLVSPILTVV), and 240–260 (LMAGLAVVIAEGVIIYGTGHW).

This sequence belongs to the CobS family. The cofactor is Mg(2+).

Its subcellular location is the cell membrane. The catalysed reaction is alpha-ribazole + adenosylcob(III)inamide-GDP = adenosylcob(III)alamin + GMP + H(+). It catalyses the reaction alpha-ribazole 5'-phosphate + adenosylcob(III)inamide-GDP = adenosylcob(III)alamin 5'-phosphate + GMP + H(+). It functions in the pathway cofactor biosynthesis; adenosylcobalamin biosynthesis; adenosylcobalamin from cob(II)yrinate a,c-diamide: step 7/7. Functionally, joins adenosylcobinamide-GDP and alpha-ribazole to generate adenosylcobalamin (Ado-cobalamin). Also synthesizes adenosylcobalamin 5'-phosphate from adenosylcobinamide-GDP and alpha-ribazole 5'-phosphate. The polypeptide is Adenosylcobinamide-GDP ribazoletransferase (Lachnoclostridium phytofermentans (strain ATCC 700394 / DSM 18823 / ISDg) (Clostridium phytofermentans)).